The primary structure comprises 276 residues: NADPH-dependent 7-cyano-7-deazaguanine reductase (276 aa).

83 to 85 (IES) contributes to the substrate binding site. 85–86 (SK) is an NADPH binding site. Cysteine 184 acts as the Thioimide intermediate in catalysis. Aspartate 191 functions as the Proton donor in the catalytic mechanism. 223 to 224 (HE) serves as a coordination point for substrate. An NADPH-binding site is contributed by 252-253 (RG).

The protein belongs to the GTP cyclohydrolase I family. QueF type 2 subfamily. In terms of assembly, homodimer.

The protein resides in the cytoplasm. It carries out the reaction 7-aminomethyl-7-carbaguanine + 2 NADP(+) = 7-cyano-7-deazaguanine + 2 NADPH + 3 H(+). It participates in tRNA modification; tRNA-queuosine biosynthesis. Functionally, catalyzes the NADPH-dependent reduction of 7-cyano-7-deazaguanine (preQ0) to 7-aminomethyl-7-deazaguanine (preQ1). The chain is NADPH-dependent 7-cyano-7-deazaguanine reductase from Pseudomonas syringae pv. syringae (strain B728a).